We begin with the raw amino-acid sequence, 392 residues long: Anhydro-N-acetylmuramic acid kinase (392 aa).

Residue 19-26 (GTSVDGID) participates in ATP binding.

Belongs to the anhydro-N-acetylmuramic acid kinase family.

It carries out the reaction 1,6-anhydro-N-acetyl-beta-muramate + ATP + H2O = N-acetyl-D-muramate 6-phosphate + ADP + H(+). It functions in the pathway amino-sugar metabolism; 1,6-anhydro-N-acetylmuramate degradation. The protein operates within cell wall biogenesis; peptidoglycan recycling. Its function is as follows. Catalyzes the specific phosphorylation of 1,6-anhydro-N-acetylmuramic acid (anhMurNAc) with the simultaneous cleavage of the 1,6-anhydro ring, generating MurNAc-6-P. Is required for the utilization of anhMurNAc either imported from the medium or derived from its own cell wall murein, and thus plays a role in cell wall recycling. The polypeptide is Anhydro-N-acetylmuramic acid kinase (Trichormus variabilis (strain ATCC 29413 / PCC 7937) (Anabaena variabilis)).